The sequence spans 169 residues: Crossover junction endodeoxyribonuclease RuvC (169 aa).

Residues Asp11, Glu71, and Asp143 contribute to the active site. Mg(2+) is bound by residues Asp11, Glu71, and Asp143.

It belongs to the RuvC family. As to quaternary structure, homodimer which binds Holliday junction (HJ) DNA. The HJ becomes 2-fold symmetrical on binding to RuvC with unstacked arms; it has a different conformation from HJ DNA in complex with RuvA. In the full resolvosome a probable DNA-RuvA(4)-RuvB(12)-RuvC(2) complex forms which resolves the HJ. Mg(2+) serves as cofactor.

It localises to the cytoplasm. It carries out the reaction Endonucleolytic cleavage at a junction such as a reciprocal single-stranded crossover between two homologous DNA duplexes (Holliday junction).. In terms of biological role, the RuvA-RuvB-RuvC complex processes Holliday junction (HJ) DNA during genetic recombination and DNA repair. Endonuclease that resolves HJ intermediates. Cleaves cruciform DNA by making single-stranded nicks across the HJ at symmetrical positions within the homologous arms, yielding a 5'-phosphate and a 3'-hydroxyl group; requires a central core of homology in the junction. The consensus cleavage sequence is 5'-(A/T)TT(C/G)-3'. Cleavage occurs on the 3'-side of the TT dinucleotide at the point of strand exchange. HJ branch migration catalyzed by RuvA-RuvB allows RuvC to scan DNA until it finds its consensus sequence, where it cleaves and resolves the cruciform DNA. The protein is Crossover junction endodeoxyribonuclease RuvC of Rhizobium etli (strain CIAT 652).